The primary structure comprises 877 residues: Putative ankyrin repeat protein R748 (877 aa).

6 ANK repeats span residues 44–74, 79–109, 115–145, 202–231, 243–272, and 282–311; these read IRHICLTGSYNNNQMSIMKILMNKFPKTINV, QNNTYLHQSIFNRHKIFVDFFMNELNDNINY, IGISHLHALVNYGYIDHIETAIIKDPGAIQQ, MGYRAIECAVRYCSTDVIDELISLGFSINE, NNNDLIGFATQIDRLDMVKHLINIGAPIHM, and LVPTCLVVAIKFKRDQCIHYLLNLPESIQA. The interval 525 to 579 is disordered; that stretch reads DSDEDPVCDSNESDNSNDINNHVKSDNKLNSSNDYYDEDDSEDNYNNQSDDEPLV. The span at 533-544 shows a compositional bias: low complexity; it reads DSNESDNSNDIN.

In Acanthamoeba polyphaga mimivirus (APMV), this protein is Putative ankyrin repeat protein R748.